Consider the following 183-residue polypeptide: ATP synthase subunit delta (183 aa).

It belongs to the ATPase delta chain family. In terms of assembly, F-type ATPases have 2 components, F(1) - the catalytic core - and F(0) - the membrane proton channel. F(1) has five subunits: alpha(3), beta(3), gamma(1), delta(1), epsilon(1). F(0) has three main subunits: a(1), b(2) and c(10-14). The alpha and beta chains form an alternating ring which encloses part of the gamma chain. F(1) is attached to F(0) by a central stalk formed by the gamma and epsilon chains, while a peripheral stalk is formed by the delta and b chains.

The protein localises to the cell inner membrane. F(1)F(0) ATP synthase produces ATP from ADP in the presence of a proton or sodium gradient. F-type ATPases consist of two structural domains, F(1) containing the extramembraneous catalytic core and F(0) containing the membrane proton channel, linked together by a central stalk and a peripheral stalk. During catalysis, ATP synthesis in the catalytic domain of F(1) is coupled via a rotary mechanism of the central stalk subunits to proton translocation. In terms of biological role, this protein is part of the stalk that links CF(0) to CF(1). It either transmits conformational changes from CF(0) to CF(1) or is implicated in proton conduction. The protein is ATP synthase subunit delta of Ruthia magnifica subsp. Calyptogena magnifica.